Reading from the N-terminus, the 139-residue chain is Early placenta insulin-like peptide (139 aa).

An N-terminal signal peptide occupies residues 1–25 (MASLFRSYLPAIWLLLSQLLRESLA). Cystine bridges form between Cys-31–Cys-125, Cys-43–Cys-138, and Cys-124–Cys-129. Positions 59-114 (LESGRPKEMVSTSNNKDGQALGTTSEFIPNLSPELKKPLSEGQPSLKKIILSRKKR) are cleaved as a propeptide — c peptide.

This sequence belongs to the insulin family. Expressed in placenta, uterus and in fetal perichondrium. Expression levels were increased in both early placentas and molar pregnancies and were reduced in choriocarcinoma cells.

Its subcellular location is the secreted. Its function is as follows. May play an important role in trophoblast development and in the regulation of bone formation. The polypeptide is Early placenta insulin-like peptide (INSL4) (Homo sapiens (Human)).